The primary structure comprises 308 residues: Extended-spectrum beta-lactamase PER-1 (308 aa).

The first 26 residues, 1–26 (MNVIIKAVVTASTLLMVSFSSFETSA), serve as a signal peptide directing secretion. The active-site Nucleophile; acyl-ester intermediate is Ser71. Lys74, Ser135, and Glu171 together coordinate a beta-lactam.

This sequence belongs to the class-A beta-lactamase family. Monomer.

Its subcellular location is the secreted. It carries out the reaction a beta-lactam + H2O = a substituted beta-amino acid. Inhibited by the beta-lactamase-blocking agents clavulanic acid, tazobactam and sulbactam. Not inhibited by EDTA. Its function is as follows. Extended-spectrum beta-lactamase (ESBL) which confers resistance to penicillins, as well as first-, second- and third-generation cephalosporins, but not the carbapenem, imipenem, in the JM109 strain of E.coli. Has cefotaxime-hydrolyzing activity. This is Extended-spectrum beta-lactamase PER-1 from Pseudomonas aeruginosa.